Here is a 156-residue protein sequence, read N- to C-terminus: Aspartate carbamoyltransferase regulatory chain (156 aa).

The Zn(2+) site is built by Cys110, Cys115, Cys140, and Cys143.

Belongs to the PyrI family. In terms of assembly, contains catalytic and regulatory chains. Zn(2+) serves as cofactor.

Functionally, involved in allosteric regulation of aspartate carbamoyltransferase. This chain is Aspartate carbamoyltransferase regulatory chain, found in Methanocella arvoryzae (strain DSM 22066 / NBRC 105507 / MRE50).